A 446-amino-acid polypeptide reads, in one-letter code: Tubulin beta-2 chain (446 aa).

Residues glutamine 11, glutamate 69, serine 138, glycine 142, threonine 143, glycine 144, asparagine 204, and asparagine 226 each contribute to the GTP site. Glutamate 69 serves as a coordination point for Mg(2+). Residues 424–446 form a disordered region; sequence QYQEATADEEGEFDEDEEGGGDE. Residues 429-446 are compositionally biased toward acidic residues; sequence TADEEGEFDEDEEGGGDE.

This sequence belongs to the tubulin family. Dimer of alpha and beta chains. A typical microtubule is a hollow water-filled tube with an outer diameter of 25 nm and an inner diameter of 15 nM. Alpha-beta heterodimers associate head-to-tail to form protofilaments running lengthwise along the microtubule wall with the beta-tubulin subunit facing the microtubule plus end conferring a structural polarity. Microtubules usually have 13 protofilaments but different protofilament numbers can be found in some organisms and specialized cells. Mg(2+) serves as cofactor.

The protein localises to the cytoplasm. The protein resides in the cytoskeleton. Tubulin is the major constituent of microtubules, a cylinder consisting of laterally associated linear protofilaments composed of alpha- and beta-tubulin heterodimers. Microtubules grow by the addition of GTP-tubulin dimers to the microtubule end, where a stabilizing cap forms. Below the cap, tubulin dimers are in GDP-bound state, owing to GTPase activity of alpha-tubulin. The chain is Tubulin beta-2 chain (betaTub85D) from Drosophila erecta (Fruit fly).